We begin with the raw amino-acid sequence, 497 residues long: Glycerol kinase (497 aa).

T12 lines the ADP pocket. ATP is bound by residues T12, T13, and S14. Residue T12 coordinates sn-glycerol 3-phosphate. R16 is a binding site for ADP. 4 residues coordinate sn-glycerol 3-phosphate: R82, E83, Y134, and D243. Residues R82, E83, Y134, D243, and Q244 each contribute to the glycerol site. ADP-binding residues include T265 and G308. 4 residues coordinate ATP: T265, G308, Q312, and G411. Residue G411 participates in ADP binding.

Belongs to the FGGY kinase family.

It catalyses the reaction glycerol + ATP = sn-glycerol 3-phosphate + ADP + H(+). It participates in polyol metabolism; glycerol degradation via glycerol kinase pathway; sn-glycerol 3-phosphate from glycerol: step 1/1. Its activity is regulated as follows. Inhibited by fructose 1,6-bisphosphate (FBP). In terms of biological role, key enzyme in the regulation of glycerol uptake and metabolism. Catalyzes the phosphorylation of glycerol to yield sn-glycerol 3-phosphate. In Xanthobacter autotrophicus (strain ATCC BAA-1158 / Py2), this protein is Glycerol kinase.